We begin with the raw amino-acid sequence, 71 residues long: Conotoxin Bu24 (71 aa).

The N-terminal stretch at 1 to 21 (MGMRMMVTVFLLVVLATTVVS) is a signal peptide. Residues 22–44 (LRSNRASDGRRGIVNKLNDLVPK) constitute a propeptide that is removed on maturation. An Asparagine amide modification is found at Asn-70.

The protein belongs to the conotoxin A superfamily. In terms of processing, contains 3 disulfide bonds. They are not indicated here, since framework IV presents two different connectivities (I-V, II-III, IV-VI and I-III, II-V, IV-VI). In terms of tissue distribution, expressed by the venom duct.

Its subcellular location is the secreted. The protein is Conotoxin Bu24 of Conus bullatus (Bubble cone).